Consider the following 448-residue polypeptide: Phosphoglucosamine mutase (448 aa).

Residue serine 100 is the Phosphoserine intermediate of the active site. Mg(2+)-binding residues include serine 100, aspartate 240, aspartate 242, and aspartate 244. Position 100 is a phosphoserine (serine 100).

It belongs to the phosphohexose mutase family. The cofactor is Mg(2+). In terms of processing, activated by phosphorylation.

The catalysed reaction is alpha-D-glucosamine 1-phosphate = D-glucosamine 6-phosphate. Catalyzes the conversion of glucosamine-6-phosphate to glucosamine-1-phosphate. In Bacillus cytotoxicus (strain DSM 22905 / CIP 110041 / 391-98 / NVH 391-98), this protein is Phosphoglucosamine mutase.